We begin with the raw amino-acid sequence, 314 residues long: tRNA dimethylallyltransferase (314 aa).

An ATP-binding site is contributed by Gly11 to Thr18. Thr13–Thr18 lines the substrate pocket. 4 interaction with substrate tRNA regions span residues Asp36–Leu39, Gln160–Arg164, Arg241–Arg246, and Lys274–Arg281.

The protein belongs to the IPP transferase family. In terms of assembly, monomer. It depends on Mg(2+) as a cofactor.

It carries out the reaction adenosine(37) in tRNA + dimethylallyl diphosphate = N(6)-dimethylallyladenosine(37) in tRNA + diphosphate. Functionally, catalyzes the transfer of a dimethylallyl group onto the adenine at position 37 in tRNAs that read codons beginning with uridine, leading to the formation of N6-(dimethylallyl)adenosine (i(6)A). The sequence is that of tRNA dimethylallyltransferase from Glaesserella parasuis serovar 5 (strain SH0165) (Haemophilus parasuis).